The following is a 254-amino-acid chain: Protein EFFECTOR OF TRANSCRIPTION 3 (254 aa).

The GIY-YIG domain occupies 103–152 (RCTGLYELGVGVIGQDQGQNFDPDNNVLGVYVGQCVDVKSRLQDYGRRGG).

The protein resides in the cytoplasm. In Arabidopsis thaliana (Mouse-ear cress), this protein is Protein EFFECTOR OF TRANSCRIPTION 3.